The primary structure comprises 270 residues: Orotidine 5'-phosphate decarboxylase (270 aa).

Substrate-binding positions include Asp41, 63–65 (KTH), 95–104 (DRKFADIGNT), Tyr221, and Arg239. Lys97 serves as the catalytic Proton donor.

This sequence belongs to the OMP decarboxylase family.

It catalyses the reaction orotidine 5'-phosphate + H(+) = UMP + CO2. Its pathway is pyrimidine metabolism; UMP biosynthesis via de novo pathway; UMP from orotate: step 2/2. The chain is Orotidine 5'-phosphate decarboxylase (URA3) from Candida boidinii (Yeast).